The sequence spans 222 residues: MTTLPRRIGMLGGTFDPVHIGHLRGALEVAELLELDELRLTPSARPPHRDMPSVTAQDRLAMVRSAVAGVSPLTVDDRELKRDKPSYTLDTLESMRAELAPRDQLFLLLGWDAFCGLPTWHRWEELLEHCHIVVLQRPDADSESPDAMRNLLAARAVSDPKALKGPGGQITFVWQTPLSVSATQIRQLLASGKSVRFLVPDAVLAYIDVHGLYRAPNTDGSP.

The protein belongs to the NadD family.

The enzyme catalyses nicotinate beta-D-ribonucleotide + ATP + H(+) = deamido-NAD(+) + diphosphate. It functions in the pathway cofactor biosynthesis; NAD(+) biosynthesis; deamido-NAD(+) from nicotinate D-ribonucleotide: step 1/1. In terms of biological role, catalyzes the reversible adenylation of nicotinate mononucleotide (NaMN) to nicotinic acid adenine dinucleotide (NaAD). This chain is Probable nicotinate-nucleotide adenylyltransferase, found in Pseudomonas syringae pv. tomato (strain ATCC BAA-871 / DC3000).